Reading from the N-terminus, the 411-residue chain is Bifunctional protein GlmU (411 aa).

Residues 1 to 204 (MDAVILCAGK…ENNIKGIKLN (204 aa)) form a pyrophosphorylase region. UTP contacts are provided by residues 6–9 (LCAG), glutamine 74, and glycine 79. Threonine 80, glycine 132, glutamate 144, and asparagine 158 together coordinate N-acetyl-alpha-D-glucosamine 1-phosphate. The linker stretch occupies residues 205-224 (GYWNDIGKPWDLLDANTHIL). The interval 225 to 411 (KNIKTDIKGK…EEIIIKTKRK (187 aa)) is N-acetyltransferase. Histidine 308 acts as the Proton acceptor in catalysis. Acetyl-CoA contacts are provided by alanine 384 and lysine 401.

In the N-terminal section; belongs to the N-acetylglucosamine-1-phosphate uridyltransferase family. It in the C-terminal section; belongs to the transferase hexapeptide repeat family.

The catalysed reaction is N-acetyl-alpha-D-glucosamine 1-phosphate + UTP + H(+) = UDP-N-acetyl-alpha-D-glucosamine + diphosphate. The enzyme catalyses alpha-D-glucosamine 1-phosphate + acetyl-CoA = N-acetyl-alpha-D-glucosamine 1-phosphate + CoA + H(+). The protein operates within nucleotide-sugar biosynthesis; UDP-N-acetyl-alpha-D-glucosamine biosynthesis; N-acetyl-alpha-D-glucosamine 1-phosphate from alpha-D-glucosamine 6-phosphate (route II): step 2/2. It functions in the pathway nucleotide-sugar biosynthesis; UDP-N-acetyl-alpha-D-glucosamine biosynthesis; UDP-N-acetyl-alpha-D-glucosamine from N-acetyl-alpha-D-glucosamine 1-phosphate: step 1/1. Catalyzes the last two sequential reactions in the de novo biosynthetic pathway for UDP-N-acetyl-glucosamine (UDP-GlcNAc). Responsible for the acetylation of GlcN-1-P to GlcNAc-1-P, and for the uridyl transfer from UTP to GlcNAc-1-P, to produce UDP-GlcNAc and pyrophosphate. This chain is Bifunctional protein GlmU, found in Methanococcus aeolicus (strain ATCC BAA-1280 / DSM 17508 / OCM 812 / Nankai-3).